The sequence spans 406 residues: WD repeat and SOCS box-containing protein 2 (406 aa).

The segment at 70–89 (AKSRSSKNETKGRGSPKEKT) is disordered. WD repeat units follow at residues 107–150 (PPSK…LLLN), 153–193 (GHQD…KQIQ), 197–236 (GHLQ…LIRK), 239–278 (GHQS…RLRS), and 293–332 (VHIS…PIAF). The 49-residue stretch at 358–406 (HVQFWTAPRVLSSLKHLCRKALRSFLTTYQVLALPIPKKMKEFLTYRTF) folds into the SOCS box domain.

It participates in protein modification; protein ubiquitination. In terms of biological role, may be a substrate-recognition component of a SCF-like ECS (Elongin-Cullin-SOCS-box protein) E3 ubiquitin ligase complex which mediates the ubiquitination and subsequent proteasomal degradation of target proteins. In Bos taurus (Bovine), this protein is WD repeat and SOCS box-containing protein 2 (WSB2).